The sequence spans 363 residues: MIIDTTKLQAINSFYRSESLKEVYGLVWLLIPIFILVLGIVIGVLVIVWLERQISAGVQQRIGPEYAGPLGILQALADGTKLLFKEDLLPSRGDIYLFSIGPSIAVIAILLSYLVIPFGYHLVLADLSIGVFLWIAISSIAPIGLLMSGYGSNNKYSFLGGLRAAAQSISYEIPLTPCVLSISLLSNSSSTVDIVEAQAKYGFWGWNLWRQPIGFTVFFISSLAECERLPFDLPEAEEELVAGYQTEYSGIKFGLFYVASYLNLLVSSLFVTVLYLGGWNLSIPHILIPELFGINEMGGVFGMTIGIFITLAKAYLFLFISITTRWTLPRMRMDQLLNLGWKFLLPISLGNLLLTTSFQLFSL.

6 helical membrane-spanning segments follow: residues 27–47 (VWLLIPIFILVLGIVIGVLVI), 104–124 (IAVIAILLSYLVIPFGYHLVL), 127–147 (LSIGVFLWIAISSIAPIGLLM), 248–268 (YSGIKFGLFYVASYLNLLVSS), 300–320 (VFGMTIGIFITLAKAYLFLFI), and 343–363 (FLLPISLGNLLLTTSFQLFSL).

This sequence belongs to the complex I subunit 1 family. In terms of assembly, NDH is composed of at least 16 different subunits, 5 of which are encoded in the nucleus.

It localises to the plastid. Its subcellular location is the chloroplast thylakoid membrane. It catalyses the reaction a plastoquinone + NADH + (n+1) H(+)(in) = a plastoquinol + NAD(+) + n H(+)(out). It carries out the reaction a plastoquinone + NADPH + (n+1) H(+)(in) = a plastoquinol + NADP(+) + n H(+)(out). In terms of biological role, NDH shuttles electrons from NAD(P)H:plastoquinone, via FMN and iron-sulfur (Fe-S) centers, to quinones in the photosynthetic chain and possibly in a chloroplast respiratory chain. The immediate electron acceptor for the enzyme in this species is believed to be plastoquinone. Couples the redox reaction to proton translocation, and thus conserves the redox energy in a proton gradient. The sequence is that of NAD(P)H-quinone oxidoreductase subunit 1, chloroplastic from Ranunculus macranthus (Large buttercup).